The following is a 448-amino-acid chain: Chaperone SurA (448 aa).

Positions 1–27 are cleaved as a signal peptide; that stretch reads MKKTLRFAAVASGLVASLITVAPSASA. 2 PpiC domains span residues 185 to 288 and 301 to 399; these read QQDL…RLVE and IVQT…QVLG.

Its subcellular location is the periplasm. It catalyses the reaction [protein]-peptidylproline (omega=180) = [protein]-peptidylproline (omega=0). Chaperone involved in the correct folding and assembly of outer membrane proteins. Recognizes specific patterns of aromatic residues and the orientation of their side chains, which are found more frequently in integral outer membrane proteins. May act in both early periplasmic and late outer membrane-associated steps of protein maturation. The polypeptide is Chaperone SurA (Burkholderia pseudomallei (strain 1710b)).